The following is a 324-amino-acid chain: tRNA U34 carboxymethyltransferase (324 aa).

Carboxy-S-adenosyl-L-methionine contacts are provided by residues K92, W106, K111, G131, 153–155, 181–182, M197, Y201, and R316; these read DPT and IE.

It belongs to the class I-like SAM-binding methyltransferase superfamily. CmoB family. Homotetramer.

The catalysed reaction is carboxy-S-adenosyl-L-methionine + 5-hydroxyuridine(34) in tRNA = 5-carboxymethoxyuridine(34) in tRNA + S-adenosyl-L-homocysteine + H(+). In terms of biological role, catalyzes carboxymethyl transfer from carboxy-S-adenosyl-L-methionine (Cx-SAM) to 5-hydroxyuridine (ho5U) to form 5-carboxymethoxyuridine (cmo5U) at position 34 in tRNAs. The sequence is that of tRNA U34 carboxymethyltransferase from Methylococcus capsulatus (strain ATCC 33009 / NCIMB 11132 / Bath).